A 597-amino-acid polypeptide reads, in one-letter code: MSLAFNLRAIPFSGHTIQSRRGLFPVHESPMITTKPFVAVKCSLTTSTDLMGKIKDKFNGKVHTSLPAITTHSADTPCNLCIIDTLQRLGVDRYFQSEIDSILDDTYRLWQLKKEDIFSDITTHAMAFRLLRVKGYQVSSEELAPYADQERVNLQEIDVPTVIELYRAAQERVTEEDSTLKKLYVWTSTFLKQQLLTDAIPDKKLHEQVDYYLKNYHGILDRMGVRRSLDLYDVGHYKTLKAADGFSNLCNEDLLAFAMQDFNISQAQHQKELQQLQRWYSDCRLDTLKFGRDVVRVSNFLTSAMSGDPELSDVRLAFAKHIVLVTRIDDFFDHGGSKEESYKILELVKEWKEKPAGEYGSEEIEILFTAVYNTVNELAEMAHIEQGRSVKDLLIKLWVEILSIFKIELDTWSDDTALTLDEYLSSSWVSIGCRICILISMQFLGVKLTDEMLLSEECTDLCRHVSMVDRLLNDVQTFEKERKENTGNSVSLLLAAHKDERAINEEEAITKAKDLAEYNRRKLMQIVYKTGTIFPRKCKDMFLKVCRIGCYLYSSGDEFTTPQQMMEDMKSLVYEPLTIHPPEANNVVGRKQSCVSN.

Residues 1-51 constitute a chloroplast transit peptide; it reads MSLAFNLRAIPFSGHTIQSRRGLFPVHESPMITTKPFVAVKCSLTTSTDLM. Residues Asp-329, Asp-333, Asn-473, and Glu-481 each coordinate Mg(2+). Residues 329–333 carry the DDXXD motif motif; sequence DDFFD.

This sequence belongs to the terpene synthase family. Mg(2+) is required as a cofactor.

The protein localises to the plastid. It localises to the chloroplast. The enzyme catalyses (+)-copalyl diphosphate = miltiradiene + diphosphate. Its pathway is secondary metabolite biosynthesis; terpenoid biosynthesis. In terms of biological role, involved in the biosynthesis of ent-kaurene diterpenoids natural products such as oridonin, miltiradiene, eriocalyxin B and nezukol, known to exhibit antitumor, anti-inflammatory and antibacterial activities. Catalyzes the conversion of (+)-copalyl diphosphate ((+)-CPP) to miltiradiene. This Isodon japonicus (Scutellaria japonica) protein is Miltiradiene synthase KSL2, chloroplastic.